Here is a 144-residue protein sequence, read N- to C-terminus: MAASKVKQDMPPVGGYGPIDYKRNLPRRGLSGYSMFAVGIGALLFGYWSMMKWNRERRRLQIEDFEARIALMPLLQAEKDRRVLQMLRENLEEEATVMKDVPGWKVGESVFHTTRWVTPMMGELYGLRASEEVLSATYGFIWYT.

N-acetylalanine is present on alanine 2. Residues 30-51 form a helical membrane-spanning segment; the sequence is LSGYSMFAVGIGALLFGYWSMM.

Complex I is composed of 45 different subunits. Interacts with CARD15, but not with CARD4. Interacts with STAT3, but not with STAT1, STAT2 and STAT5A. Interacts with OLFM4.

It localises to the mitochondrion inner membrane. The protein localises to the nucleus. Accessory subunit of the mitochondrial membrane respiratory chain NADH dehydrogenase (Complex I), that is believed not to be involved in catalysis. Complex I functions in the transfer of electrons from NADH to the respiratory chain. The immediate electron acceptor for the enzyme is believed to be ubiquinone. Involved in the interferon/all-trans-retinoic acid (IFN/RA) induced cell death. This apoptotic activity is inhibited by interaction with viral IRF1. Prevents the transactivation of STAT3 target genes. May play a role in CARD15-mediated innate mucosal responses and serve to regulate intestinal epithelial cell responses to microbes. The sequence is that of NADH dehydrogenase [ubiquinone] 1 alpha subcomplex subunit 13 (NDUFA13) from Bos taurus (Bovine).